The chain runs to 133 residues: Small ribosomal subunit protein uS8c (133 aa).

Disordered regions lie at residues 1–23 and 44–133; these read MGNDAIDDVTTAPRNASSRGAET and FSGN…HVWR. 2 stretches are compositionally biased toward polar residues: residues 12 to 23 and 55 to 66; these read APRNASSRGAET and TNRFPVSTSKYQ. The segment covering 67–81 has biased composition (basic residues); that stretch reads GRTRKARITTRRRVS. A compositionally biased stretch (basic and acidic residues) spans 114 to 133; the sequence is TDREARQKRIGGEAPRHVWR.

This sequence belongs to the universal ribosomal protein uS8 family. As to quaternary structure, part of the 30S ribosomal subunit.

The protein resides in the plastid. The protein localises to the chloroplast. In terms of biological role, one of the primary rRNA binding proteins, it binds directly to 16S rRNA central domain where it helps coordinate assembly of the platform of the 30S subunit. This Selaginella uncinata (Blue spike-moss) protein is Small ribosomal subunit protein uS8c (rps8).